The following is a 304-amino-acid chain: Ribosomal RNA small subunit methyltransferase H (304 aa).

S-adenosyl-L-methionine is bound by residues 37-39, aspartate 57, phenylalanine 85, aspartate 100, and histidine 107; that span reads GGH.

This sequence belongs to the methyltransferase superfamily. RsmH family.

The protein localises to the cytoplasm. It catalyses the reaction cytidine(1402) in 16S rRNA + S-adenosyl-L-methionine = N(4)-methylcytidine(1402) in 16S rRNA + S-adenosyl-L-homocysteine + H(+). Functionally, specifically methylates the N4 position of cytidine in position 1402 (C1402) of 16S rRNA. This is Ribosomal RNA small subunit methyltransferase H from Azobacteroides pseudotrichonymphae genomovar. CFP2.